Here is a 480-residue protein sequence, read N- to C-terminus: RAC-alpha serine/threonine-protein kinase (480 aa).

One can recognise a PH domain in the interval 5-108 (AIVKEGWLHK…WATAIQTVAD (104 aa)). N6-acetyllysine is present on residues K14 and K20. 14 to 19 (KRGEYI) is a 1D-myo-inositol 1,3,4,5-tetrakisphosphate binding site. 1D-myo-inositol 1,3,4,5-tetrakisphosphate-binding positions include 23 to 25 (RPR) and N53. A disulfide bond links C60 and C77. Position 86 (R86) interacts with 1D-myo-inositol 1,3,4,5-tetrakisphosphate. The interval 114 to 137 (EEETMDFRSGSPSDNSGAEEMEVS) is disordered. The residue at position 124 (S124) is a Phosphoserine. A phosphoserine; alternate mark is found at S126 and S129. Residues S126 and S129 are each glycosylated (O-linked (GlcNAc) serine; alternate). The Protein kinase domain occupies 150–408 (FEYLKLLGKG…AKEIMQHRFF (259 aa)). 156–164 (LGKGTFGKV) is a binding site for ATP. Residue Y176 is modified to Phosphotyrosine; by TNK2. K179 lines the ATP pocket. D274 (proton acceptor) is an active-site residue. K284 participates in a covalent cross-link: Glycyl lysine isopeptide (Lys-Gly) (interchain with G-Cter in ubiquitin). C296 and C310 form a disulfide bridge. The O-linked (GlcNAc) threonine glycan is linked to T305. T308 is subject to Phosphothreonine; by IKKE, PDPK1 and TBK1. T312 carries an O-linked (GlcNAc) threonine glycan. One can recognise an AGC-kinase C-terminal domain in the interval 409–480 (ANIVWQDVYE…QFSYSASGTA (72 aa)). T448 is modified (phosphothreonine). Residue T450 is modified to Phosphothreonine; by MTOR. Positions 450–480 (TPPDQDDSMECVDSERRPHFPQFSYSASGTA) are disordered. O-linked (GlcNAc) serine; alternate glycosylation occurs at S473. A Phosphoserine; by IKKE, MTOR, PRKDC and TBK1; alternate modification is found at S473. Phosphotyrosine is present on Y474. Phosphoserine; by CDK2 and MTOR is present on S477. T479 is subject to Phosphothreonine; by CDK2 and MTOR.

This sequence belongs to the protein kinase superfamily. AGC Ser/Thr protein kinase family. RAC subfamily. In terms of assembly, interacts with and phosphorylated by PDPK1. Interacts with AGAP2 (isoform 2/PIKE-A); the interaction occurs in the presence of guanine nucleotides. Interacts with AKTIP. Interacts (via PH domain) with MTCP1, TCL1A and TCL1B. Interacts with CDKN1B; the interaction phosphorylates CDKN1B promoting 14-3-3 binding and cell-cycle progression. Interacts with MAP3K5 and TRAF6. Interacts with BAD, PPP2R5B, STK3 and STK4. Interacts (via PH domain) with SIRT1. Interacts with SRPK2 in a phosphorylation-dependent manner. Interacts with TRIM13; the interaction ubiquitinates AKT1 leading to its proteasomal degradation. Interacts with RAF1. Interacts (via the C-terminus) with CCDC88A (via its C-terminus) and THEM4 (via its C-terminus). Interacts with GRB10; the interaction leads to GRB10 phosphorylation thus promoting YWHAE-binding. Interacts with KCTD20. Interacts with BTBD10. Interacts with PA2G4. Interacts with KIF14; the interaction is detected in the plasma membrane upon INS stimulation and promotes AKT1 phosphorylation. Interacts with FAM83B; activates the PI3K/AKT signaling cascade. Interacts with WDFY2 (via WD repeats 1-3). Forms a complex with WDFY2 and FOXO1. Interacts with FAM168A. Interacts with SYAP1 (via phosphorylated form and BSD domain); this interaction is enhanced in a mTORC2-mediated manner in response to epidermal growth factor (EGF) stimulation and activates AKT1. Interacts with PKHM3. Interacts with FKBP5/FKBP51; promoting interaction between Akt/AKT1 and PHLPP1, thereby enhancing dephosphorylation and subsequent activation of Akt/AKT1. Interacts with TMEM175; leading to formation of the lysoK(GF) complex. O-GlcNAcylation at Thr-305 and Thr-312 inhibits activating phosphorylation at Thr-308 via disrupting the interaction between AKT1 and PDPK1. O-GlcNAcylation at Ser-473 also probably interferes with phosphorylation at this site. In terms of processing, phosphorylation on Thr-308, Ser-473 and Tyr-474 is required for full activity. Phosphorylation of the activation loop at Thr-308 by PDPK1/PDK1 is a prerequisite for full activation. Phosphorylation by mTORC2 in response to growth factors plays a key role in AKT1 activation: mTORC2 phosphorylates different sites depending on the context, such as Thr-450, Ser-473, Ser-477 or Thr-479, thereby facilitating subsequent phosphorylation of the activation loop by PDPK1/PDK1. Phosphorylation at Ser-473 by mTORC2 promotes ubiquitination and degradation by the proteasome. Also phosphorylated at Ser-477 and Thr-479 by CDK2, facilitating subsequent phosphorylation of the activation loop by PDPK1/PDK1. Activated TNK2 phosphorylates it on Tyr-176 resulting in its binding to the anionic plasma membrane phospholipid PA. This phosphorylated form localizes to the cell membrane, where it is targeted by PDPK1 and PDPK2 for further phosphorylations on Thr-308 and Ser-473 leading to its activation. Phosphorylated at Thr-308 and Ser-473 by IKBKE and TBK1. Ser-473 phosphorylation is enhanced by interaction with AGAP2 isoform 2 (PIKE-A). Ser-473 phosphorylation is enhanced by signaling through activated FLT3. Ser-473 is dephosphorylated by PHLPP. Dephosphorylated at Thr-308 and Ser-473 by PP2A phosphatase. The phosphorylated form of PPP2R5B is required for bridging AKT1 with PP2A phosphatase. Ser-473 is dephosphorylated by CPPED1, leading to termination of signaling. AIM2 acts as an inhibitor of AKT1 by inhibiting phosphorylation Ser-473: AIM2 acts both by inhibiting the activity of PRKDC/DNA-PK kinase and promoting dephosphorylation by PP2A phosphatase. Post-translationally, ubiquitinated; undergoes both 'Lys-48'- and 'Lys-63'-linked polyubiquitination. TRAF6-induced 'Lys-63'-linked AKT1 ubiquitination is critical for phosphorylation and activation. When ubiquitinated, it translocates to the plasma membrane, where it becomes phosphorylated. When fully phosphorylated and translocated into the nucleus, undergoes 'Lys-48'-polyubiquitination catalyzed by TTC3, leading to its degradation by the proteasome. Also ubiquitinated by TRIM13 leading to its proteasomal degradation. Ubiquitinated via 'Lys-48'-linked polyubiquitination by ZNRF1, leading to its degradation by the proteasome. Phosphorylated, undergoes 'Lys-48'-linked polyubiquitination preferentially at Lys-284 catalyzed by MUL1, leading to its proteasomal degradation. Acetylated on Lys-14 and Lys-20 by the histone acetyltransferases EP300 and KAT2B. Acetylation results in reduced phosphorylation and inhibition of activity. Deacetylated at Lys-14 and Lys-20 by SIRT1. SIRT1-mediated deacetylation relieves the inhibition. In terms of processing, cleavage by caspase-3/CASP3. Cleaved at the caspase-3 consensus site Asp-462 during apoptosis, resulting in down-regulation of the AKT signaling pathway and decreased cell survival. Widely expressed. Low levels found in liver with slightly higher levels present in thymus and testis.

The protein localises to the cytoplasm. It is found in the nucleus. The protein resides in the cell membrane. Its subcellular location is the mitochondrion intermembrane space. The catalysed reaction is L-seryl-[protein] + ATP = O-phospho-L-seryl-[protein] + ADP + H(+). It catalyses the reaction L-threonyl-[protein] + ATP = O-phospho-L-threonyl-[protein] + ADP + H(+). With respect to regulation, three specific sites, one in the kinase domain (Thr-308) and the two other ones in the C-terminal regulatory region (Ser-473 and Tyr-474), need to be phosphorylated for its full activation. AKT1 is one of 3 closely related serine/threonine-protein kinases (AKT1, AKT2 and AKT3) called the AKT kinase, and which regulate many processes including metabolism, proliferation, cell survival, growth and angiogenesis. This is mediated through serine and/or threonine phosphorylation of a range of downstream substrates. Over 100 substrate candidates have been reported so far, but for most of them, no isoform specificity has been reported. AKT is responsible of the regulation of glucose uptake by mediating insulin-induced translocation of the SLC2A4/GLUT4 glucose transporter to the cell surface. Phosphorylation of PTPN1 at 'Ser-50' negatively modulates its phosphatase activity preventing dephosphorylation of the insulin receptor and the attenuation of insulin signaling. Phosphorylation of TBC1D4 triggers the binding of this effector to inhibitory 14-3-3 proteins, which is required for insulin-stimulated glucose transport. AKT also regulates the storage of glucose in the form of glycogen by phosphorylating GSK3A at 'Ser-21' and GSK3B at 'Ser-9', resulting in inhibition of its kinase activity. Phosphorylation of GSK3 isoforms by AKT is also thought to be one mechanism by which cell proliferation is driven. AKT also regulates cell survival via the phosphorylation of MAP3K5 (apoptosis signal-related kinase). Phosphorylation of 'Ser-83' decreases MAP3K5 kinase activity stimulated by oxidative stress and thereby prevents apoptosis. AKT mediates insulin-stimulated protein synthesis by phosphorylating TSC2 at 'Ser-939' and 'Thr-1462', thereby activating the mTORC1 signaling pathway, and leading to both phosphorylation of 4E-BP1 and in activation of RPS6KB1. Also regulates the mTORC1 signaling pathway by catalyzing phosphorylation of CASTOR1 and DEPDC5. AKT plays a role as key modulator of the AKT-mTOR signaling pathway controlling the tempo of the process of newborn neurons integration during adult neurogenesis, including correct neuron positioning, dendritic development and synapse formation. Part of a positive feedback loop of mTORC2 signaling by mediating phosphorylation of MAPKAP1/SIN1, promoting mTORC2 activation. AKT is involved in the phosphorylation of members of the FOXO factors (Forkhead family of transcription factors), leading to binding of 14-3-3 proteins and cytoplasmic localization. In particular, FOXO1 is phosphorylated at 'Thr-24', 'Ser-256' and 'Ser-319'. FOXO3 and FOXO4 are phosphorylated on equivalent sites. AKT has an important role in the regulation of NF-kappa-B-dependent gene transcription and positively regulates the activity of CREB1 (cyclic AMP (cAMP)-response element binding protein). The phosphorylation of CREB1 induces the binding of accessory proteins that are necessary for the transcription of pro-survival genes such as BCL2 and MCL1. AKT phosphorylates 'Ser-454' on ATP citrate lyase (ACLY), thereby potentially regulating ACLY activity and fatty acid synthesis. Activates the 3B isoform of cyclic nucleotide phosphodiesterase (PDE3B) via phosphorylation of 'Ser-273', resulting in reduced cyclic AMP levels and inhibition of lipolysis. Phosphorylates PIKFYVE on 'Ser-318', which results in increased PI(3)P-5 activity. The Rho GTPase-activating protein DLC1 is another substrate and its phosphorylation is implicated in the regulation cell proliferation and cell growth. Signals downstream of phosphatidylinositol 3-kinase (PI(3)K) to mediate the effects of various growth factors such as platelet-derived growth factor (PDGF), epidermal growth factor (EGF), insulin and insulin-like growth factor 1 (IGF1). AKT mediates the antiapoptotic effects of IGF1. Essential for the SPATA13-mediated regulation of cell migration and adhesion assembly and disassembly. May be involved in the regulation of the placental development. Phosphorylates STK4/MST1 at 'Thr-120' and 'Thr-387' leading to inhibition of its: kinase activity, nuclear translocation, autophosphorylation and ability to phosphorylate FOXO3. Phosphorylates STK3/MST2 at 'Thr-117' and 'Thr-384' leading to inhibition of its: cleavage, kinase activity, autophosphorylation at Thr-180, binding to RASSF1 and nuclear translocation. Phosphorylates SRPK2 and enhances its kinase activity towards SRSF2 and ACIN1 and promotes its nuclear translocation. Phosphorylates RAF1 at 'Ser-259' and negatively regulates its activity. Phosphorylation of BAD stimulates its pro-apoptotic activity. Phosphorylates KAT6A at 'Thr-369' and this phosphorylation inhibits the interaction of KAT6A with PML and negatively regulates its acetylation activity towards p53/TP53. Phosphorylates palladin (PALLD), modulating cytoskeletal organization and cell motility. Phosphorylates prohibitin (PHB), playing an important role in cell metabolism and proliferation. Phosphorylates CDKN1A, for which phosphorylation at 'Thr-145' induces its release from CDK2 and cytoplasmic relocalization. These recent findings indicate that the AKT1 isoform has a more specific role in cell motility and proliferation. Phosphorylates CLK2 thereby controlling cell survival to ionizing radiation. Phosphorylates PCK1 at 'Ser-90', reducing the binding affinity of PCK1 to oxaloacetate and changing PCK1 into an atypical protein kinase activity using GTP as donor. Also acts as an activator of TMEM175 potassium channel activity in response to growth factors: forms the lysoK(GF) complex together with TMEM175 and acts by promoting TMEM175 channel activation, independently of its protein kinase activity. Acts as a negative regulator of the cGAS-STING pathway by mediating phosphorylation of CGAS during mitosis, leading to its inhibition. Acts as a regulator of mitochondrial calcium uptake by mediating phosphorylation of MICU1 in the mitochondrial intermembrane space, impairing MICU1 maturation. Acts as an inhibitor of tRNA methylation by mediating phosphorylation of the N-terminus of METTL1, thereby inhibiting METTL1 methyltransferase activity. In response to LPAR1 receptor pathway activation, phosphorylates Rabin8/RAB3IP which alters its activity and phosphorylates WDR44 which induces WDR44 binding to Rab11, thereby switching Rab11 vesicular function from preciliary trafficking to endocytic recycling. In Mus musculus (Mouse), this protein is RAC-alpha serine/threonine-protein kinase (Akt1).